Reading from the N-terminus, the 33-residue chain is Gastrin (33 aa).

Residues 1–21 (ELEPQGPPHLGTDLSKKQGPW) are disordered. Residue Gln-18 is modified to Pyrrolidone carboxylic acid. Sulfotyrosine is present on Tyr-28. The residue at position 33 (Phe-33) is a Phenylalanine amide.

Belongs to the gastrin/cholecystokinin family.

It localises to the secreted. In terms of biological role, gastrin stimulates the stomach mucosa to produce and secrete hydrochloric acid and the pancreas to secrete its digestive enzymes. It also stimulates smooth muscle contraction and increases blood circulation and water secretion in the stomach and intestine. This is Gastrin (GAST) from Chinchilla chinchilla (Short-tailed chinchilla).